The primary structure comprises 107 residues: U1-lycotoxin-Ls1v (107 aa).

An N-terminal signal peptide occupies residues Met1–Ser20. Positions Glu21–Arg41 are excised as a propeptide. Disulfide bonds link Cys44-Cys59, Cys51-Cys68, Cys58-Cys86, and Cys70-Cys84.

The protein belongs to the neurotoxin 19 (CSTX) family. 04 (U1-Lctx) subfamily. As to expression, expressed by the venom gland.

It is found in the secreted. The chain is U1-lycotoxin-Ls1v from Lycosa singoriensis (Wolf spider).